A 106-amino-acid polypeptide reads, in one-letter code: MIVFDVSLMIIIIFSFAFNMSQSNILMLYNSPHVLVGSDARNFFSCKKWHRCFSGEVILEEKKSQSALGSRSLTCTCPLISAVQLHLERSFFSLAFFAVILLYIPG.

This is an uncharacterized protein from Saccharomyces cerevisiae (strain ATCC 204508 / S288c) (Baker's yeast).